Reading from the N-terminus, the 217-residue chain is UPF0323 lipoprotein HPSH_01205 (217 aa).

An N-terminal signal peptide occupies residues 1–27 (MKKPYRKISDYAIVGGLSALVMVSIVG). Residue Cys-28 is the site of N-palmitoyl cysteine attachment. Cys-28 carries S-diacylglycerol cysteine lipidation. Positions 160–171 (QRTYKSPQAYQR) are enriched in polar residues. Residues 160–217 (QRTYKSPQAYQRSQNSFSKSAPSASSMGGASKGQSGFFGSSRPTSSPAVSSGTRGFNS) form a disordered region. The span at 172 to 210 (SQNSFSKSAPSASSMGGASKGQSGFFGSSRPTSSPAVSS) shows a compositional bias: low complexity.

It belongs to the UPF0323 family.

The protein localises to the cell membrane. This is UPF0323 lipoprotein HPSH_01205 from Helicobacter pylori (strain Shi470).